Consider the following 397-residue polypeptide: Argininosuccinate synthase (397 aa).

Residue Ala-8–Ser-16 coordinates ATP. Tyr-86 and Ser-91 together coordinate L-citrulline. Gly-116 lines the ATP pocket. Positions 118, 122, and 123 each coordinate L-aspartate. Asn-122 is a binding site for L-citrulline. L-citrulline is bound by residues Arg-126, Ser-175, Ser-184, Glu-260, and Tyr-272.

This sequence belongs to the argininosuccinate synthase family. Type 1 subfamily. In terms of assembly, homotetramer.

The protein resides in the cytoplasm. The catalysed reaction is L-citrulline + L-aspartate + ATP = 2-(N(omega)-L-arginino)succinate + AMP + diphosphate + H(+). The protein operates within amino-acid biosynthesis; L-arginine biosynthesis; L-arginine from L-ornithine and carbamoyl phosphate: step 2/3. In Clostridium botulinum (strain Kyoto / Type A2), this protein is Argininosuccinate synthase.